The following is a 126-amino-acid chain: Glycine cleavage system H protein (126 aa).

A Lipoyl-binding domain is found at 22–104 (VVFIGITDYA…YGAGWIIKVK (83 aa)). Position 63 is an N6-lipoyllysine (Lys-63).

Belongs to the GcvH family. In terms of assembly, the glycine cleavage system is composed of four proteins: P, T, L and H. Requires (R)-lipoate as cofactor.

In terms of biological role, the glycine cleavage system catalyzes the degradation of glycine. The H protein shuttles the methylamine group of glycine from the P protein to the T protein. The sequence is that of Glycine cleavage system H protein from Porphyromonas gingivalis (strain ATCC 33277 / DSM 20709 / CIP 103683 / JCM 12257 / NCTC 11834 / 2561).